The following is a 241-amino-acid chain: MTALPAASITSSAFDDLDALNAQLEGLRADQRVAWALQHGPQNAALSSSFGAQSAVTLHLLSQQRPDIPVILIDTGYLFPETYRFADALTERLKLNLKVYRPLVSRAWMEARHGRLWEQGMVGIDQYNNLRKVEPMRRALNELDVGTWFTGLRRSQSGGRAQTPIMQKRGERYKISPIADWTDRDVWQYLQAHDLPYHPLWEQGYVSIGDFHTTRRWEPGMREEDTRFYGLKRECGIHEDI.

Residue cysteine 235 is the Nucleophile; cysteine thiosulfonate intermediate of the active site.

It belongs to the PAPS reductase family. CysH subfamily.

It is found in the cytoplasm. It catalyses the reaction [thioredoxin]-disulfide + sulfite + adenosine 3',5'-bisphosphate + 2 H(+) = [thioredoxin]-dithiol + 3'-phosphoadenylyl sulfate. It functions in the pathway sulfur metabolism; hydrogen sulfide biosynthesis; sulfite from sulfate: step 3/3. In terms of biological role, catalyzes the formation of sulfite from phosphoadenosine 5'-phosphosulfate (PAPS) using thioredoxin as an electron donor. The chain is Phosphoadenosine 5'-phosphosulfate reductase from Xanthomonas axonopodis pv. citri (strain 306).